A 348-amino-acid polypeptide reads, in one-letter code: Structural glycoprotein p40 (348 aa).

Belongs to the baculoviridae gp41 family. Post-translationally, O-glycosylated; contains N-acetylglucosamine side chains.

This is Structural glycoprotein p40 (P40) from Bombyx mori nuclear polyhedrosis virus (BmNPV).